Reading from the N-terminus, the 1083-residue chain is Ubiquitin-protein ligase E3C (1083 aa).

Basic and acidic residues-rich tracts occupy residues 1–10 and 20–40; these read MFSFEGDFKT and SRKEEKASLLHRTQEERRKRE. Residues 1 to 40 form a disordered region; it reads MFSFEGDFKTRPKVSLGGASRKEEKASLLHRTQEERRKRE. A cis-determinant of acceptor ubiquitin-binding region spans residues 1–60; that stretch reads MFSFEGDFKTRPKVSLGGASRKEEKASLLHRTQEERRKREEERRRLKNAVIIQSFIRGYR. The IQ domain maps to 45–74; it reads RLKNAVIIQSFIRGYRDRKQQYFIQRSAFD. Residues 354 to 386 are disordered; that stretch reads ASPTGTGCPDSTSDSEDDNEETDQPNSPEDGRV. Acidic residues predominate over residues 366 to 376; it reads SDSEDDNEETD. The 340-residue stretch at 744–1083 folds into the HECT domain; sequence NEPDLKKRIR…IECAAGFELS (340 aa). Lys903 is covalently cross-linked (Glycyl lysine isopeptide (Lys-Gly) (interchain with G-Cter in ubiquitin); by autocatalysis). Cys1051 serves as the catalytic Glycyl thioester intermediate.

Belongs to the UBE3C family. In terms of assembly, interacts with 26S proteasomes. Interacts (via the HECT domain) with UBE2D1 and, less efficiently, with UBE2L3. In terms of processing, autoubiquitinated; promoting its own degradation.

The catalysed reaction is S-ubiquitinyl-[E2 ubiquitin-conjugating enzyme]-L-cysteine + [acceptor protein]-L-lysine = [E2 ubiquitin-conjugating enzyme]-L-cysteine + N(6)-ubiquitinyl-[acceptor protein]-L-lysine.. It functions in the pathway protein modification; protein ubiquitination. Its function is as follows. E3 ubiquitin-protein ligase that specifically catalyzes 'Lys-29'- and 'Lys-48'-linked polyubiquitin chains. Accepts ubiquitin from the E2 ubiquitin-conjugating enzyme UBE2D1 in the form of a thioester and then directly transfers the ubiquitin to targeted substrates. Associates with the proteasome and promotes elongation of ubiquitin chains on substrates bound to the 26S proteasome. Also catalyzes 'Lys-29'- and 'Lys-48'-linked ubiquitination of 26S proteasome subunit ADRM1/RPN13 in response to proteotoxic stress, impairing the ability of the proteasome to bind and degrade ubiquitin-conjugated proteins. Acts as a negative regulator of autophagy by mediating 'Lys-29'- and 'Lys-48'-linked ubiquitination of PIK3C3/VPS34, promoting its degradation. Can assemble unanchored poly-ubiquitin chains in either 'Lys-29'- or 'Lys-48'-linked polyubiquitin chains; with some preference for 'Lys-48' linkages. Acts as a negative regulator of type I interferon by mediating 'Lys-48'-linked ubiquitination of IRF3 and IRF7, leading to their degradation by the proteasome. Catalyzes ubiquitination and degradation of CAND2. The polypeptide is Ubiquitin-protein ligase E3C (Mus musculus (Mouse)).